Consider the following 211-residue polypeptide: uncharacterized protein (211 aa).

Disordered stretches follow at residues 1 to 73 and 96 to 123; these read MLRR…SKLK and TNAA…ASLS. Composition is skewed to polar residues over residues 26-35 and 53-62; these read SKSSLISLTS and APSQFLSPTN. Low complexity predominate over residues 63–73; sequence KRSTSSQSKLK. Ser182 carries the post-translational modification Phosphoserine. Thr184 carries the post-translational modification Phosphothreonine. Position 186 is a phosphoserine (Ser186).

This is an uncharacterized protein from Saccharomyces cerevisiae (strain ATCC 204508 / S288c) (Baker's yeast).